The primary structure comprises 159 residues: SsrA-binding protein (159 aa).

It belongs to the SmpB family.

Its subcellular location is the cytoplasm. In terms of biological role, required for rescue of stalled ribosomes mediated by trans-translation. Binds to transfer-messenger RNA (tmRNA), required for stable association of tmRNA with ribosomes. tmRNA and SmpB together mimic tRNA shape, replacing the anticodon stem-loop with SmpB. tmRNA is encoded by the ssrA gene; the 2 termini fold to resemble tRNA(Ala) and it encodes a 'tag peptide', a short internal open reading frame. During trans-translation Ala-aminoacylated tmRNA acts like a tRNA, entering the A-site of stalled ribosomes, displacing the stalled mRNA. The ribosome then switches to translate the ORF on the tmRNA; the nascent peptide is terminated with the 'tag peptide' encoded by the tmRNA and targeted for degradation. The ribosome is freed to recommence translation, which seems to be the essential function of trans-translation. The chain is SsrA-binding protein from Mycobacteroides abscessus (strain ATCC 19977 / DSM 44196 / CCUG 20993 / CIP 104536 / JCM 13569 / NCTC 13031 / TMC 1543 / L948) (Mycobacterium abscessus).